We begin with the raw amino-acid sequence, 852 residues long: Pentatricopeptide repeat-containing protein At5g02830, chloroplastic (852 aa).

The N-terminal 25 residues, 1–25 (MRDFVIVFGSSSAITNPHHHHRRCY), are a transit peptide targeting the chloroplast. Residues 17–60 (PHHHHRRCYATAPESNRKTKSNSSFTKLLPSLPQQHSPSPASVS) are disordered. Positions 44–58 (LLPSLPQQHSPSPAS) are enriched in low complexity. 8 PPR repeats span residues 334–364 (DMTS…AKRM), 373–407 (DAFT…GVTP), 408–442 (NTHT…GCEP), 443–477 (NSQC…SVNE), 525–557 (TTAT…GLSP), 558–592 (NQIT…GTRP), 593–627 (DVVA…QIKP), and 628–665 (NWVT…GYKP).

The protein belongs to the PPR family. P subfamily.

The protein resides in the plastid. It is found in the chloroplast. The sequence is that of Pentatricopeptide repeat-containing protein At5g02830, chloroplastic from Arabidopsis thaliana (Mouse-ear cress).